The following is a 1805-amino-acid chain: Cytadherence high molecular weight protein 2 (1805 aa).

Coiled-coil stretches lie at residues 28-838, 914-1591, 1632-1723, and 1777-1804; these read EKNR…NNAF, ELKI…LRTQ, DNTL…QHNT, and NITK…KAAS.

Component of the cytoskeleton-like structure which stabilizes the shape of the wall-less Mycoplasma. This cytoskeleton-like network of accessory proteins containing HMW proteins 1 to 5 allows the proper anchoring of cytadhesin proteins in the mycoplasmal membrane at the attachment organelle. This is Cytadherence high molecular weight protein 2 (hmw2) from Mycoplasma genitalium (strain ATCC 33530 / DSM 19775 / NCTC 10195 / G37) (Mycoplasmoides genitalium).